A 459-amino-acid polypeptide reads, in one-letter code: FBD-associated F-box protein At1g61320 (459 aa).

Residues 1-25 (MAPPTKRTRVEMAESSNKRMKPSET) form a disordered region. Residues 21 to 69 (KPSETVPEDVLELMMSTYLPVQSLLTTRVLSKRFRETEVRSLDLDFSGI) enclose the F-box domain. The FBD domain maps to 396-428 (VKIIGYKGHWHELDIVEFFVKNAPSLKRLELQM).

The protein is FBD-associated F-box protein At1g61320 of Arabidopsis thaliana (Mouse-ear cress).